Reading from the N-terminus, the 1966-residue chain is Histone-lysine N-methyltransferase SETD1B (1966 aa).

Residues 1–12 (MENSHPPHHHHQ) show a composition bias toward basic residues. The interval 1 to 26 (MENSHPPHHHHQQPPPQPGPSGERRN) is disordered. The interval 68-98 (VEDPRVVGIWTKNKELELSVPKFKIDEFYVG) is interaction with WDR82. Residues 93 to 181 (DEFYVGPVPP…NIIHVELDTK (89 aa)) form the RRM domain. 7 disordered regions span residues 235 to 302 (GCGS…LFSQ), 357 to 660 (VGGT…PKPM), 675 to 719 (LAPT…PPPA), 963 to 1462 (KVKR…SGPL), 1501 to 1541 (PPLL…RPPA), 1555 to 1606 (QPQT…KLPF), and 1636 to 1668 (AKSR…PQPL). Composition is skewed to polar residues over residues 243-259 (VTPN…TAYS), 265-274 (TPNSYGQGTP), and 282-300 (PFSQ…SYLF). Pro residues-rich tracts occupy residues 432-441 (PAPPPLPPAE) and 449-458 (GTPPGPPPPD). Residues 493–521 (EKPHDSLDSRIEMLLKEQRTKLLFLREPD) are compositionally biased toward basic and acidic residues. Over residues 531–543 (SPISSSSSQLSPL) the composition is skewed to low complexity. Residues 592–603 (PRPPPEPGPPDP) show a composition bias toward pro residues. Over residues 637–646 (EDMEISDDEM) the composition is skewed to acidic residues. Positions 679–719 (LPLPPPPGFPPLPPPPPPPPPQPGFPMPPPLPPPPPPPPPA) are enriched in pro residues. 2 positions are modified to phosphoserine: Ser-986 and Ser-994. A compositionally biased stretch (basic and acidic residues) spans 995–1015 (ERERDRDMADTPCELAKRDPK). Ser-1031 carries the post-translational modification Phosphoserine. Low complexity predominate over residues 1041–1064 (LSASSSSSASSSSGSSTTSPSSSA). Composition is skewed to acidic residues over residues 1067-1087 (KEEE…EEEE) and 1104-1142 (KDDD…EEET). A compositionally biased stretch (low complexity) spans 1148 to 1174 (SKAEATSSSESSESSEFESSSESSPSS). Residues 1173–1204 (SSSEDEEEVVAREEEEEEEEEEMVAEESMASA) are a coiled coil. Composition is skewed to acidic residues over residues 1175–1197 (SEDE…EMVA) and 1229–1238 (GMEEEVDIET). Phosphoserine is present on residues Ser-1265, Ser-1283, and Ser-1335. Pro residues predominate over residues 1312 to 1340 (EPPMMLPLPLQPPLPPPRPPRPPSPPPEP). Residues 1383–1425 (PGGEPPLSGGSSGLSLSSPQVPGSPFSYPAPSPSLSSGGLPRT) are compositionally biased toward low complexity. Residues 1501 to 1514 (PPLLPAPLASCPPP) show a composition bias toward pro residues. The span at 1515–1524 (MKRKPGRPRR) shows a compositional bias: basic residues. The segment covering 1580 to 1600 (PAPPPPLPPQPPPPPPPPPVE) has biased composition (pro residues). A phosphoserine mark is found at Ser-1659 and Ser-1663. The WDR5 interaction motif (WIN) motif lies at 1745–1750 (GCARSE). The segment at 1767 to 1800 (SRASTDEPPADTQGMSIPAQPHASTRAGSERRSE) is disordered. A RxxxRR motif motif is present at residues 1798–1803 (RSEQRR). The SET domain maps to 1827-1944 (KKLKFCKSHI…VNEEITYDYK (118 aa)). Position 1943 (Tyr-1943) interacts with S-adenosyl-L-methionine. In terms of domain architecture, Post-SET spans 1950 to 1966 (VKIPCLCGSENCRGTLN).

Belongs to the class V-like SAM-binding methyltransferase superfamily. Component of the SET1B/COMPASS complex composed of the catalytic subunit SETD1B, WDR5, WDR82, RBBP5, ASH2L/ASH2, CXXC1/CFP1, HCFC1, DPY30 homotrimer and BOD1. Forms a core complex with the evolutionary conserved subcomplex WRAD composed of WDR5, RBBP5, ASH2L/ASH2 and DPY30 subunits; WRAD differentially stimulates the methyltransferase activity. Interacts with HCFC1 and ASH2L/ASH2. Interacts (via N-terminal region) with WDR82. Interacts (via the RRM domain) with hyperphosphorylated C-terminal domain (CTD) of RNA polymerase II large subunit (POLR2A) only in the presence of WDR82. Binds specifically to CTD heptad repeats phosphorylated on 'Ser-5' of each heptad. Interacts with RBM15. Interacts (via WIN motif) with WDR5.

It is found in the nucleus. The protein localises to the nucleus speckle. Its subcellular location is the chromosome. It localises to the cytoplasm. It catalyses the reaction L-lysyl(4)-[histone H3] + S-adenosyl-L-methionine = N(6)-methyl-L-lysyl(4)-[histone H3] + S-adenosyl-L-homocysteine + H(+). The enzyme catalyses N(6)-methyl-L-lysyl(4)-[histone H3] + S-adenosyl-L-methionine = N(6),N(6)-dimethyl-L-lysyl(4)-[histone H3] + S-adenosyl-L-homocysteine + H(+). The catalysed reaction is N(6),N(6)-dimethyl-L-lysyl(4)-[histone H3] + S-adenosyl-L-methionine = N(6),N(6),N(6)-trimethyl-L-lysyl(4)-[histone H3] + S-adenosyl-L-homocysteine + H(+). Histone methyltransferase that catalyzes methyl group transfer from S-adenosyl-L-methionine to the epsilon-amino group of 'Lys-4' of histone H3 (H3K4) via a non-processive mechanism. Part of chromatin remodeling machinery, forms H3K4me1, H3K4me2 and H3K4me3 methylation marks at active chromatin sites where transcription and DNA repair take place. Plays an essential role in regulating the transcriptional programming of multipotent hematopoietic progenitor cells and lymphoid lineage specification during hematopoiesis. The polypeptide is Histone-lysine N-methyltransferase SETD1B (SETD1B) (Homo sapiens (Human)).